Here is a 396-residue protein sequence, read N- to C-terminus: MSKTIAINAGSSSLKWQLYLMPEEKVLAKGLIERIGLKDSISTVKFDGRTEKQVLDITDHTQAVKILLDDLMRFNIIASFDEITGVGHRVVAGGEYFKDSALVDEEVIQKVEELSLLAPLHNPANAAGIRAFKELLPDITSVVVFDTSFHTTMPEKAYRYPLPTKYYKENKVRKYGAHGTSHEYVAHEAAKLLGKPLEELKLITCHIGNGASITAVDKGVSVDTSMGFTPLGGVMMGTRTGDIDPAIIPYLMQHTDDFKTPEDISRILNRESGLLGVSEKSSDMRDIHEAMRAGDAKAQLANDIFVDRIQKYIGQYLAVLNGADAIIFTAGIGENSVTIRKLVIEGISWFGCDIDPEKNVYGQYGNISTPEAKVRVLVIPTDEELVIARDVERFKK.

Position 8 (asparagine 8) interacts with Mg(2+). Position 15 (lysine 15) interacts with ATP. Residue arginine 89 coordinates substrate. Aspartate 146 functions as the Proton donor/acceptor in the catalytic mechanism. ATP contacts are provided by residues 206-210, 283-285, and 331-335; these read HIGNG, DMR, and GIGEN. Glutamate 383 is a Mg(2+) binding site.

The protein belongs to the acetokinase family. In terms of assembly, homodimer. Mg(2+) serves as cofactor. Requires Mn(2+) as cofactor.

It localises to the cytoplasm. The enzyme catalyses acetate + ATP = acetyl phosphate + ADP. Its pathway is metabolic intermediate biosynthesis; acetyl-CoA biosynthesis; acetyl-CoA from acetate: step 1/2. Functionally, catalyzes the formation of acetyl phosphate from acetate and ATP. Can also catalyze the reverse reaction. The protein is Acetate kinase of Streptococcus gordonii (strain Challis / ATCC 35105 / BCRC 15272 / CH1 / DL1 / V288).